A 138-amino-acid chain; its full sequence is DASH complex subunit DAD2 (138 aa).

Positions Met-1–Arg-14 are enriched in polar residues. Disordered regions lie at residues Met-1–Ser-25 and Pro-116–Gly-138.

This sequence belongs to the DASH complex DAD2 family. Component of the DASH complex consisting of ASK1, DAD1, DAD2, DAD3, DAD4, DAM1, DUO1, HSK3, SPC19 and SPC34, with a stoichiometry of one copy of each subunit per complex. Multiple DASH complexes oligomerize to form a ring that encircles spindle microtubules and organizes the rod-like NDC80 complexes of the outer kinetochore. DASH complex oligomerization strengthens microtubule attachments. On cytoplasmic microtubules, DASH complexes appear to form patches instead of rings.

It localises to the chromosome. The protein localises to the centromere. The protein resides in the kinetochore. Its subcellular location is the cytoplasm. It is found in the cytoskeleton. It localises to the spindle. The protein localises to the nucleus. Functionally, component of the DASH complex that connects microtubules with kinetochores and couples microtubule depolymerisation to chromosome movement; it is involved in retrieving kinetochores to the spindle poles before their re-orientation on the spindle in early mitosis and allows microtubule depolymerization to pull chromosomes apart and resist detachment during anaphase. Kinetochores, consisting of a centromere-associated inner segment and a microtubule-contacting outer segment, play a crucial role in chromosome segregation by mediating the physical connection between centromeric DNA and microtubules. Kinetochores also serve as an input point for the spindle assembly checkpoint, which delays anaphase until all chromosomes have bioriented on the mitotic spindle. The sequence is that of DASH complex subunit DAD2 from Chaetomium thermophilum (strain DSM 1495 / CBS 144.50 / IMI 039719) (Thermochaetoides thermophila).